Reading from the N-terminus, the 354-residue chain is Ribosomal RNA large subunit methyltransferase M (354 aa).

S-adenosyl-L-methionine contacts are provided by residues Ser-183, 216 to 219, Asp-235, Asp-255, and Asp-271; that span reads SPGG. Lys-300 acts as the Proton acceptor in catalysis.

It belongs to the class I-like SAM-binding methyltransferase superfamily. RNA methyltransferase RlmE family. RlmM subfamily. In terms of assembly, monomer.

It localises to the cytoplasm. The catalysed reaction is cytidine(2498) in 23S rRNA + S-adenosyl-L-methionine = 2'-O-methylcytidine(2498) in 23S rRNA + S-adenosyl-L-homocysteine + H(+). Catalyzes the 2'-O-methylation at nucleotide C2498 in 23S rRNA. This chain is Ribosomal RNA large subunit methyltransferase M, found in Pseudomonas entomophila (strain L48).